Reading from the N-terminus, the 337-residue chain is UDP-3-O-acylglucosamine N-acyltransferase (337 aa).

His238 functions as the Proton acceptor in the catalytic mechanism.

The protein belongs to the transferase hexapeptide repeat family. LpxD subfamily. In terms of assembly, homotrimer.

The catalysed reaction is a UDP-3-O-[(3R)-3-hydroxyacyl]-alpha-D-glucosamine + a (3R)-hydroxyacyl-[ACP] = a UDP-2-N,3-O-bis[(3R)-3-hydroxyacyl]-alpha-D-glucosamine + holo-[ACP] + H(+). Its pathway is bacterial outer membrane biogenesis; LPS lipid A biosynthesis. Catalyzes the N-acylation of UDP-3-O-acylglucosamine using 3-hydroxyacyl-ACP as the acyl donor. Is involved in the biosynthesis of lipid A, a phosphorylated glycolipid that anchors the lipopolysaccharide to the outer membrane of the cell. The sequence is that of UDP-3-O-acylglucosamine N-acyltransferase from Xanthomonas campestris pv. campestris (strain 8004).